Here is a 213-residue protein sequence, read N- to C-terminus: Kynurenine formamidase (213 aa).

Trp-18 serves as a coordination point for substrate. 3 residues coordinate Zn(2+): His-48, His-52, and Asp-54. The active-site Proton donor/acceptor is His-58. Residues His-160 and Glu-172 each coordinate Zn(2+).

It belongs to the Cyclase 1 superfamily. KynB family. As to quaternary structure, homodimer. The cofactor is Zn(2+).

It carries out the reaction N-formyl-L-kynurenine + H2O = L-kynurenine + formate + H(+). Its pathway is amino-acid degradation; L-tryptophan degradation via kynurenine pathway; L-kynurenine from L-tryptophan: step 2/2. Catalyzes the hydrolysis of N-formyl-L-kynurenine to L-kynurenine, the second step in the kynurenine pathway of tryptophan degradation. The chain is Kynurenine formamidase from Burkholderia pseudomallei (strain 1710b).